The sequence spans 548 residues: SH2B adapter protein 3 (548 aa).

The span at 1–11 (MNEPTVQPSRT) shows a compositional bias: polar residues. 3 disordered regions span residues 1 to 25 (MNEPTVQPSRTSSAPASPASPRGWS), 78 to 108 (SLAGPPGHDYRATAPPRPALPKARSSEDLGP), and 128 to 160 (RSAGELPGATSDTNDIDTTAASRPGPARKLLPW). The segment covering 12–21 (SSAPASPASP) has biased composition (low complexity). 3 positions are modified to phosphoserine: serine 13, serine 102, and serine 129. Over residues 137-148 (TSDTNDIDTTAA) the composition is skewed to polar residues. A PH domain is found at 168 to 279 (EALKEVVLRY…WLAELRASTG (112 aa)). The interval 290-313 (PLSLAAEPGPARSPRGSTDSLDQG) is disordered. Serine 302 is modified (phosphoserine). The region spanning 336 to 434 (WFHGPISRVR…ACDVRLSGYV (99 aa)) is the SH2 domain.

Belongs to the SH2B adapter family. Tyrosine phosphorylated.

Its function is as follows. Links T-cell receptor activation signal to phospholipase C-gamma-1, GRB2 and phosphatidylinositol 3-kinase. The sequence is that of SH2B adapter protein 3 (Sh2b3) from Mus musculus (Mouse).